A 480-amino-acid chain; its full sequence is Probable tRNA N6-adenosine threonylcarbamoyltransferase, mitochondrial (480 aa).

Residues 1 to 86 (MVRLFLTLSP…NPNFDDNLVV (86 aa)) constitute a mitochondrion transit peptide. Positions 194 and 198 each coordinate a divalent metal cation. Residues 217–221 (LISGG), Asp250, Gly265, Glu269, 373–374 (SN), and Thr401 contribute to the substrate site. Asp402 is an a divalent metal cation binding site.

It belongs to the KAE1 / TsaD family. In terms of assembly, homodimer. A divalent metal cation is required as a cofactor. In terms of tissue distribution, expressed in young developing leaves, roots, flowers and siliques.

It localises to the mitochondrion inner membrane. It catalyses the reaction L-threonylcarbamoyladenylate + adenosine(37) in tRNA = N(6)-L-threonylcarbamoyladenosine(37) in tRNA + AMP + H(+). Required for the formation of a threonylcarbamoyl group on adenosine at position 37 (t(6)A37) in mitochondrial tRNAs that read codons beginning with adenine. Probably involved in the transfer of the threonylcarbamoyl moiety of threonylcarbamoyl-AMP (TC-AMP) to the N6 group of A37. Involved in mitochondrial genome maintenance. May have a role in embryonic development in plants. This Arabidopsis thaliana (Mouse-ear cress) protein is Probable tRNA N6-adenosine threonylcarbamoyltransferase, mitochondrial.